Consider the following 314-residue polypeptide: Epithelial-stromal interaction protein 1 (314 aa).

Disordered stretches follow at residues 1 to 72 (MYPR…PNET), 200 to 219 (NRSA…WKLP), 225 to 267 (PSRA…HQEE), and 292 to 314 (SQPG…GWGI). Residues 43-58 (AEPKGPKLERQGHGDQ) show a composition bias toward basic and acidic residues. Residues 71–180 (ETRRQKIQRI…QEDIRRATLR (110 aa)) adopt a coiled-coil conformation. The span at 232–267 (AHKDSPQKEDNQKLQKTRDGHQKNKLLETKGQHQEE) shows a compositional bias: basic and acidic residues. A compositionally biased stretch (polar residues) spans 305-314 (NMNSTDGWGI).

Its function is as follows. Plays a role in M1 macrophage polarization and is required for the proper regulation of gene expression during M1 versus M2 macrophage differentiation. Might play a role in RELA/p65 and STAT1 phosphorylation and nuclear localization upon activation of macrophages. The protein is Epithelial-stromal interaction protein 1 (Epsti1) of Rattus norvegicus (Rat).